A 101-amino-acid polypeptide reads, in one-letter code: Signal recognition particle 19 kDa protein (101 aa).

It belongs to the SRP19 family. Part of the signal recognition particle protein translocation system, which is composed of SRP and FtsY. Archaeal SRP consists of a 7S RNA molecule of 300 nucleotides and two protein subunits: SRP54 and SRP19.

It localises to the cytoplasm. Its function is as follows. Involved in targeting and insertion of nascent membrane proteins into the cytoplasmic membrane. Binds directly to 7S RNA and mediates binding of the 54 kDa subunit of the SRP. The sequence is that of Signal recognition particle 19 kDa protein from Methanosarcina acetivorans (strain ATCC 35395 / DSM 2834 / JCM 12185 / C2A).